Here is a 65-residue protein sequence, read N- to C-terminus: MPKIKTLRSAAKRFKKTESGKFKRKQAHLRHILTKKNTHYKRHLRSKVMISKKDIQKVRLFLPYL.

A disordered region spans residues 1-26 (MPKIKTLRSAAKRFKKTESGKFKRKQ).

It belongs to the bacterial ribosomal protein bL35 family.

This is Large ribosomal subunit protein bL35 from Buchnera aphidicola subsp. Baizongia pistaciae (strain Bp).